Reading from the N-terminus, the 125-residue chain is UPF0332 protein AF_0298 (125 aa).

The protein belongs to the UPF0332 family.

This Archaeoglobus fulgidus (strain ATCC 49558 / DSM 4304 / JCM 9628 / NBRC 100126 / VC-16) protein is UPF0332 protein AF_0298.